We begin with the raw amino-acid sequence, 421 residues long: MANFDILEDLKWRGAINQETDEEGLRDYLAKHDDLALYCGTDPTGDSLHIGHLIPFMILKRFQLAGYKPVIVIGGGTGSIGDPSGRSTERVLQSEETIKHNEEALTAQMVKLFGTENFRIVNNRDWLGKMNLLEFLRDYGKLFQVNNMLNKEVVASRLKNGISFTEFSYQILQAIDFYILNRDHCVQMQIGGADQWGNITAGIDLIHRLEGADRPAFGLTIPLMLKADGTKFGKSAGGAVWLDPEKTSPYEFYQFWINQDDRDVIKYLKYFTFLKHEEIDALEEKVKTEPWKREAQKRLAEEVTKFVHGEEGLKEAQTVTEALFSGNVKDLTTKQVEIALAKAPSAESGAEKKNLVDFLVDTKIESSKRQAREDVNNGAIYVNGDRIQDTDFEVDPAAAFDGKFVIIRKGKKKYTLVHIKG.

Tyrosine 38 lines the L-tyrosine pocket. Positions 43-52 (PTGDSLHIGH) match the 'HIGH' region motif. Residues tyrosine 169 and glutamine 173 each coordinate L-tyrosine. The 'KMSKS' region motif lies at 231–235 (KFGKS). An ATP-binding site is contributed by lysine 234. Positions 353 to 419 (KNLVDFLVDT…GKKKYTLVHI (67 aa)) constitute an S4 RNA-binding domain.

It belongs to the class-I aminoacyl-tRNA synthetase family. TyrS type 1 subfamily. In terms of assembly, homodimer.

It localises to the cytoplasm. The catalysed reaction is tRNA(Tyr) + L-tyrosine + ATP = L-tyrosyl-tRNA(Tyr) + AMP + diphosphate + H(+). Its function is as follows. Catalyzes the attachment of tyrosine to tRNA(Tyr) in a two-step reaction: tyrosine is first activated by ATP to form Tyr-AMP and then transferred to the acceptor end of tRNA(Tyr). In Lactobacillus delbrueckii subsp. bulgaricus (strain ATCC 11842 / DSM 20081 / BCRC 10696 / JCM 1002 / NBRC 13953 / NCIMB 11778 / NCTC 12712 / WDCM 00102 / Lb 14), this protein is Tyrosine--tRNA ligase.